A 283-amino-acid chain; its full sequence is NAD kinase (283 aa).

D69 serves as the catalytic Proton acceptor. NAD(+)-binding positions include 69 to 70 (DG), 138 to 139 (NE), K166, D168, L176, 179 to 184 (TAYNLS), and Q235.

It belongs to the NAD kinase family. The cofactor is a divalent metal cation.

Its subcellular location is the cytoplasm. The catalysed reaction is NAD(+) + ATP = ADP + NADP(+) + H(+). Functionally, involved in the regulation of the intracellular balance of NAD and NADP, and is a key enzyme in the biosynthesis of NADP. Catalyzes specifically the phosphorylation on 2'-hydroxyl of the adenosine moiety of NAD to yield NADP. This Helicobacter acinonychis (strain Sheeba) protein is NAD kinase.